Consider the following 185-residue polypeptide: Probable chorismate pyruvate-lyase (185 aa).

Substrate-binding residues include Arg-80, Leu-118, and Glu-170.

The protein belongs to the UbiC family.

It is found in the cytoplasm. It carries out the reaction chorismate = 4-hydroxybenzoate + pyruvate. The protein operates within cofactor biosynthesis; ubiquinone biosynthesis. Functionally, removes the pyruvyl group from chorismate, with concomitant aromatization of the ring, to provide 4-hydroxybenzoate (4HB) for the ubiquinone pathway. This chain is Probable chorismate pyruvate-lyase, found in Pseudomonas putida (strain ATCC 47054 / DSM 6125 / CFBP 8728 / NCIMB 11950 / KT2440).